We begin with the raw amino-acid sequence, 228 residues long: Urease accessory protein UreF (228 aa).

Belongs to the UreF family. In terms of assembly, ureD, UreF and UreG form a complex that acts as a GTP-hydrolysis-dependent molecular chaperone, activating the urease apoprotein by helping to assemble the nickel containing metallocenter of UreC. The UreE protein probably delivers the nickel.

The protein localises to the cytoplasm. Its function is as follows. Required for maturation of urease via the functional incorporation of the urease nickel metallocenter. In Prochlorococcus marinus subsp. pastoris (strain CCMP1986 / NIES-2087 / MED4), this protein is Urease accessory protein UreF.